A 169-amino-acid polypeptide reads, in one-letter code: Interleukin-36 gamma (169 aa).

A propeptide spanning residues 1 to 17 is cleaved from the precursor; it reads MRGTPGDADGGGRAVYQ.

The protein belongs to the IL-1 family. As to quaternary structure, interacts with cargo receptor TMED10; the interaction mediates the translocation from the cytoplasm into the ERGIC (endoplasmic reticulum-Golgi intermediate compartment) and thereby secretion. In terms of processing, N-terminal truncation leads to a dramatic enhancement of its activity (&gt;1000-fold). Proteolytically cleaved by cathepsin CTSG. In terms of tissue distribution, highly expressed in tissues containing epithelial cells: skin, lung, stomach and esophagus. Expressed in bronchial epithelial. In skin is expressed only in keratinocytes but not in fibroblasts, endothelial cells or melanocytes. Up-regulated in lesional psoriasis skin. Expressed in monocyte-derived dendritic cells and M1 macrophages.

It is found in the cytoplasm. The protein resides in the secreted. Functionally, cytokine that binds to and signals through the IL1RL2/IL-36R receptor which in turn activates NF-kappa-B and MAPK signaling pathways in target cells. Part of the IL-36 signaling system that is thought to be present in epithelial barriers and to take part in local inflammatory response; similar to the IL-1 system with which it shares the coreceptor IL1RAP. Seems to be involved in skin inflammatory response by acting on keratinocytes, dendritic cells and indirectly on T-cells to drive tissue infiltration, cell maturation and cell proliferation. In cultured keratinocytes induces the expression of macrophage, T-cell, and neutrophil chemokines, such as CCL3, CCL4, CCL5, CCL2, CCL17, CCL22, CL20, CCL5, CCL2, CCL17, CCL22, CXCL8, CCL20 and CXCL1; also stimulates its own expression and that of the prototypic cutaneous pro-inflammatory parameters TNF-alpha, S100A7/psoriasin and inducible NOS. May play a role in pro-inflammatory responses during particular neutrophilic airway inflammation: activates mitogen-activated protein kinases and NF-kappa B in primary lung fibroblasts, and stimulates the expression of IL-8 and CXCL3 and Th17 chemokine CCL20 in lung fibroblasts. May be involved in the innate immune response to fungal pathogens, such as Aspergillus fumigatus. The chain is Interleukin-36 gamma from Homo sapiens (Human).